Reading from the N-terminus, the 466-residue chain is 3-isopropylmalate dehydratase large subunit (466 aa).

The [4Fe-4S] cluster site is built by cysteine 347, cysteine 407, and cysteine 410.

It belongs to the aconitase/IPM isomerase family. LeuC type 1 subfamily. In terms of assembly, heterodimer of LeuC and LeuD. [4Fe-4S] cluster serves as cofactor.

The catalysed reaction is (2R,3S)-3-isopropylmalate = (2S)-2-isopropylmalate. It functions in the pathway amino-acid biosynthesis; L-leucine biosynthesis; L-leucine from 3-methyl-2-oxobutanoate: step 2/4. In terms of biological role, catalyzes the isomerization between 2-isopropylmalate and 3-isopropylmalate, via the formation of 2-isopropylmaleate. This chain is 3-isopropylmalate dehydratase large subunit, found in Pectobacterium atrosepticum (strain SCRI 1043 / ATCC BAA-672) (Erwinia carotovora subsp. atroseptica).